A 352-amino-acid polypeptide reads, in one-letter code: [Citrate [pro-3S]-lyase] ligase (352 aa).

Residues Met1–Thr128 enclose the N-acetyltransferase domain.

The enzyme catalyses holo-[citrate lyase ACP] + acetate + ATP = acetyl-[citrate lyase ACP] + AMP + diphosphate. In terms of biological role, acetylation of prosthetic group (2-(5''-phosphoribosyl)-3'-dephosphocoenzyme-A) of the gamma subunit of citrate lyase. This is [Citrate [pro-3S]-lyase] ligase (citC) from Escherichia coli (strain K12).